A 159-amino-acid chain; its full sequence is Small ribosomal subunit protein uS9 (159 aa).

Belongs to the universal ribosomal protein uS9 family.

The protein is Small ribosomal subunit protein uS9 of Methylocella silvestris (strain DSM 15510 / CIP 108128 / LMG 27833 / NCIMB 13906 / BL2).